The sequence spans 178 residues: Large ribosomal subunit protein uL6 (178 aa).

This sequence belongs to the universal ribosomal protein uL6 family. Part of the 50S ribosomal subunit.

Functionally, this protein binds to the 23S rRNA, and is important in its secondary structure. It is located near the subunit interface in the base of the L7/L12 stalk, and near the tRNA binding site of the peptidyltransferase center. The chain is Large ribosomal subunit protein uL6 from Levilactobacillus brevis (strain ATCC 367 / BCRC 12310 / CIP 105137 / JCM 1170 / LMG 11437 / NCIMB 947 / NCTC 947) (Lactobacillus brevis).